The primary structure comprises 78 residues: Small nuclear ribonucleoprotein F (78 aa).

One can recognise a Sm domain in the interval 7–78 (NPKPFLQGLI…NVLWVGESTV (72 aa)).

It belongs to the snRNP Sm proteins family. SmF/LSm6 subfamily. As to quaternary structure, belongs to the 40S cdc5-associated complex (or cwf complex), a spliceosome sub-complex reminiscent of a late-stage spliceosome composed of the U2, U5 and U6 snRNAs and at least brr2, cdc5, cwf2/prp3, cwf3/syf1, cwf4/syf3, cwf5/ecm2, spp42/cwf6, cwf7/spf27, cwf8, cwf9, cwf10, cwf11, cwf12, prp45/cwf13, cwf14, cwf15, cwf16, cwf17, cwf18, cwf19, cwf20, cwf21, cwf22, cwf23, cwf24, cwf25, cwf26, cyp7/cwf27, cwf28, cwf29/ist3, lea1, msl1, prp5/cwf1, prp10, prp12/sap130, prp17, prp22, sap61, sap62, sap114, sap145, slu7, smb1, smd1, smd3, smf1, smg1 and syf2.

The protein localises to the nucleus. Its subcellular location is the cytoplasm. Plays a role in pre-mRNA splicing as a core component of the spliceosomal U1, U2, U4 and U5 small nuclear ribonucleoproteins (snRNPs), the building blocks of the spliceosome. The sequence is that of Small nuclear ribonucleoprotein F (smf1) from Schizosaccharomyces pombe (strain 972 / ATCC 24843) (Fission yeast).